Here is a 283-residue protein sequence, read N- to C-terminus: ATP phosphoribosyltransferase (283 aa).

Belongs to the ATP phosphoribosyltransferase family. Long subfamily. The cofactor is Mg(2+).

The protein localises to the cytoplasm. It catalyses the reaction 1-(5-phospho-beta-D-ribosyl)-ATP + diphosphate = 5-phospho-alpha-D-ribose 1-diphosphate + ATP. The protein operates within amino-acid biosynthesis; L-histidine biosynthesis; L-histidine from 5-phospho-alpha-D-ribose 1-diphosphate: step 1/9. Feedback inhibited by histidine. In terms of biological role, catalyzes the condensation of ATP and 5-phosphoribose 1-diphosphate to form N'-(5'-phosphoribosyl)-ATP (PR-ATP). Has a crucial role in the pathway because the rate of histidine biosynthesis seems to be controlled primarily by regulation of HisG enzymatic activity. In Rhodococcus opacus (strain B4), this protein is ATP phosphoribosyltransferase.